Reading from the N-terminus, the 424-residue chain is MFVDRAEVFVKSGSGGNGSVSFRREKYVPRGGPDGGDGGKGGDVILVVDPEITTLLDFSYKKKYVAEKGENGSGSKCFGKNGENLYIKVPLGTVIRDVDTNKIMADLSHIGDKYIVAKGGKGGRGNVRFTTAVRQAPDFAEPGMPGEERYISLELKILADVGLLGFPNVGKSTLLSVVTKAAPKIANYHFTTLSPNLGVVNIPGIQSFVIADIPGIIEGAAEGVGLGIDFLRHIERTRLLIHIVDISGLEGRDPFGDFIKINEELKKYDVKLWDRPQIIAANKADMLYDDSIFQDFKKKVENLGYNKVFKISAATRQGVEELMKEAAAMLTNIPVTDMHISEEDKFIPEEKRFTYEIEKQGNVYVVKGSFVDRLLASINVNDANELRYFHKVLQNKGVMKQLIDMGIKDGDVVRLNDFEFDYIL.

The region spanning 1–158 (MFVDRAEVFV…RYISLELKIL (158 aa)) is the Obg domain. Residues 21–42 (SFRREKYVPRGGPDGGDGGKGG) are disordered. Positions 32 to 42 (GPDGGDGGKGG) are enriched in gly residues. In terms of domain architecture, OBG-type G spans 159-331 (ADVGLLGFPN…LMKEAAAMLT (173 aa)). GTP contacts are provided by residues 165 to 172 (GFPNVGKS), 190 to 194 (FTTLS), 212 to 215 (DIPG), 282 to 285 (NKAD), and 312 to 314 (SAA). Residues S172 and T192 each contribute to the Mg(2+) site. The OCT domain maps to 345–424 (KFIPEEKRFT…LNDFEFDYIL (80 aa)).

This sequence belongs to the TRAFAC class OBG-HflX-like GTPase superfamily. OBG GTPase family. In terms of assembly, monomer. The cofactor is Mg(2+).

The protein localises to the cytoplasm. Its function is as follows. An essential GTPase which binds GTP, GDP and possibly (p)ppGpp with moderate affinity, with high nucleotide exchange rates and a fairly low GTP hydrolysis rate. Plays a role in control of the cell cycle, stress response, ribosome biogenesis and in those bacteria that undergo differentiation, in morphogenesis control. The protein is GTPase Obg of Clostridium kluyveri (strain NBRC 12016).